The following is a 314-amino-acid chain: Thymidylate synthase (314 aa).

DUMP-binding positions include arginine 21 and 176–177; that span reads RR. Residue cysteine 196 is the Nucleophile of the active site. Residues 216–219, asparagine 227, and 257–259 contribute to the dUMP site; these read RSAD and HLY. Aspartate 219 provides a ligand contact to (6R)-5,10-methylene-5,6,7,8-tetrahydrofolate. Serine 313 provides a ligand contact to (6R)-5,10-methylene-5,6,7,8-tetrahydrofolate.

Belongs to the thymidylate synthase family. Bacterial-type ThyA subfamily. As to quaternary structure, homodimer.

The protein localises to the cytoplasm. The catalysed reaction is dUMP + (6R)-5,10-methylene-5,6,7,8-tetrahydrofolate = 7,8-dihydrofolate + dTMP. The protein operates within pyrimidine metabolism; dTTP biosynthesis. Catalyzes the reductive methylation of 2'-deoxyuridine-5'-monophosphate (dUMP) to 2'-deoxythymidine-5'-monophosphate (dTMP) while utilizing 5,10-methylenetetrahydrofolate (mTHF) as the methyl donor and reductant in the reaction, yielding dihydrofolate (DHF) as a by-product. This enzymatic reaction provides an intracellular de novo source of dTMP, an essential precursor for DNA biosynthesis. The chain is Thymidylate synthase from Listeria monocytogenes serotype 4a (strain HCC23).